Consider the following 472-residue polypeptide: Membrane-bound acylglycerophosphatidylinositol O-acyltransferase MBOAT7 (472 aa).

Over 1 to 5 (MSPEE) the chain is Cytoplasmic. Residues 6–22 (WTYLVVLLISIPIGFLF) traverse the membrane as a helical segment. Residues 23–33 (KKAGPGLKRWG) are Lumenal-facing. A helical transmembrane segment spans residues 34 to 57 (AAAVGLGLTLFTCGPHTLHSLVTI). Residues 58-73 (LGTWALIQAQPCSCHA) lie on the Cytoplasmic side of the membrane. The helical transmembrane segment at 74 to 93 (LALAWTFSYLLFFRALSLLG) threads the bilayer. Residues 94 to 194 (LPTPTPFTNA…VPSLRPLLRR (101 aa)) are Lumenal-facing. The chain crosses the membrane as a helical span at residues 195 to 212 (AWPAPLFGLLFLLSSHLF). Topologically, residues 213 to 231 (PLEAVREDAFYARPLPARL) are cytoplasmic. A helical membrane pass occupies residues 232 to 261 (FYMIPVFFAFRMRFYVAWIAAECGCIAAGF). Residues 262–426 (GAYPVAAKAR…LSLADTLRYW (165 aa)) lie on the Lumenal side of the membrane. N-linked (GlcNAc...) asparagine glycosylation occurs at Asn-321. The helical transmembrane segment at 427-447 (ASIYFCIHFLALAALGLGLAL) threads the bilayer. Over 448–472 (GGGSPSRRKAASQPTSLAPEKLREE) the chain is Cytoplasmic. Residues 453-472 (SRRKAASQPTSLAPEKLREE) are disordered.

It belongs to the membrane-bound acyltransferase family. As to quaternary structure, interacts with SPTSSA; the interaction facilitates MBOAT7 location to mitochondria-associated membranes (MAMs). In terms of tissue distribution, overexpressed in metastatic breast and bladder carcinomas relative to normal breast epithelium and urothelium.

It is found in the endoplasmic reticulum membrane. It carries out the reaction a 1-acyl-sn-glycero-3-phospho-(1D-myo-inositol) + (5Z,8Z,11Z,14Z)-eicosatetraenoyl-CoA = a 1-acyl-2-(5Z,8Z,11Z,14Z-eicosatetraenoyl)-sn-glycero-3-phospho-(1D-myo-inositol) + CoA. It catalyses the reaction (5Z,8Z,11Z,14Z)-eicosatetraenoyl-CoA + 1-hexadecanoyl-sn-glycero-3-phosphocholine = 1-hexadecanoyl-2-(5Z,8Z,11Z,14Z-eicosatetraenoyl)-sn-glycero-3-phosphocholine + CoA. The catalysed reaction is a 1-acyl-sn-glycero-3-phospho-(1D-myo-inositol) + an acyl-CoA = a 1,2-diacyl-sn-glycero-3-phospho-(1D-myo-inositol) + CoA. The enzyme catalyses 1-octadecanoyl-sn-glycero-3-phospho-(1D-myo-inositol) + (5Z,8Z,11Z,14Z)-eicosatetraenoyl-CoA = 1-octadecanoyl-2-(5Z,8Z,11Z,14Z-eicosatetraenoyl)-sn-glycero-3-phospho-(1D-myo-inositol) + CoA. It participates in lipid metabolism; phospholipid metabolism. Activity is inhibited by thimerosal. Functionally, acyltransferase which catalyzes the transfer of an acyl group from an acyl-CoA to a lysophosphatidylinositol (1-acylglycerophosphatidylinositol or LPI) leading to the production of a phosphatidylinositol (1,2-diacyl-sn-glycero-3-phosphoinositol or PI) and participates in the reacylation step of the phospholipid remodeling pathway also known as the Lands cycle. Prefers arachidonoyl-CoA as the acyl donor, thus contributing to the regulation of free levels arachidonic acid in cell. In liver, participates in the regulation of triglyceride metabolism through the phosphatidylinositol acyl-chain remodeling regulation. The chain is Membrane-bound acylglycerophosphatidylinositol O-acyltransferase MBOAT7 from Homo sapiens (Human).